A 362-amino-acid chain; its full sequence is Transcription factor Sox-7 (362 aa).

The tract at residues 21–41 (EDLSDGLSPHRSPREKGSETR) is disordered. The span at 32–41 (SPREKGSETR) shows a compositional bias: basic and acidic residues. Positions 42–110 (IRRPMNAFMV…QHMQDYPNYK (69 aa)) form a DNA-binding region, HMG box. In terms of domain architecture, Sox C-terminal spans 245–362 (QTGSSMIPPV…ATYYNSYSVS (118 aa)).

As to expression, expressed in the embryonic pronephric sinus as well as posterior cardinal veins.

It is found in the nucleus. Its function is as follows. Transcription factor. Binds to the DNA sequence 5'-AACAAT-3'. Acts downstream of vegt and upstream of nodal signaling to promote endodermal and mesodermal differentiation by promoting vegt-induced expression of both endodermal genes (including endodermin) and mesodermal genes (including snai1/snail and snai2/slug). Induces expression of multiple nodal genes (including nodal, nodal2, nodal4, nodal5 and nodal6) and binds directly to sites within the promoter of the nodal5 gene. The endodermal and mesodermal specification pathways then interact to initiate cardiogenesis. Acts partially redundantly with sox18 during cardiogenesis. Also acts as an antagonist of beta-catenin signaling. Regulates (possibly indirectly) development of the pronephros, the functional larval kidney. The polypeptide is Transcription factor Sox-7 (Xenopus tropicalis (Western clawed frog)).